Here is a 132-residue protein sequence, read N- to C-terminus: Small ribosomal subunit protein uS8 (132 aa).

This sequence belongs to the universal ribosomal protein uS8 family. Part of the 30S ribosomal subunit. Contacts proteins S5 and S12.

Functionally, one of the primary rRNA binding proteins, it binds directly to 16S rRNA central domain where it helps coordinate assembly of the platform of the 30S subunit. In Streptococcus agalactiae serotype Ia (strain ATCC 27591 / A909 / CDC SS700), this protein is Small ribosomal subunit protein uS8.